The following is a 211-amino-acid chain: Claudin-7 (211 aa).

Over 1-7 (MANSGLQ) the chain is Cytoplasmic. Residues 8–28 (LLGFSMAMLGWVGLIASTAIP) form a helical membrane-spanning segment. The Extracellular portion of the chain corresponds to 29 to 81 (QWQMSSYAGDNIITAQAMYKGLWMECVTQSTGMMSCKMYDSVLALPGALQATR). A helical transmembrane segment spans residues 82–102 (ALMVVSLVLGFLAMFVATMGM). At 103-119 (KCTRCGGDDKAKKARIA) the chain is on the cytoplasmic side. The helical transmembrane segment at 120–140 (MTGGIVFIVAGLAALVACSWI) threads the bilayer. Over 141-160 (GHQIVTDFYNPLTPMNVKYE) the chain is Extracellular. The helical transmembrane segment at 161–181 (FGPAIFIGWAGSALVLLGGAL) threads the bilayer. The Cytoplasmic segment spans residues 182–211 (LSCSCPGSESKAAYRAPRSYPKSNSSKEYV). The interactions with TJP1, TJP2 and TJP3 stretch occupies residues 210 to 211 (YV).

This sequence belongs to the claudin family. In terms of assembly, directly interacts with TJP1/ZO-1, TJP2/ZO-2 and TJP3/ZO-3. The phosphorylated form interacts with EPCAM. In terms of processing, phosphorylated. As to expression, expressed predominantly in lung and kidney.

Its subcellular location is the cell membrane. It localises to the basolateral cell membrane. The protein resides in the cell junction. It is found in the tight junction. Plays a major role in tight junction-specific obliteration of the intercellular space, through calcium-independent cell-adhesion activity. The sequence is that of Claudin-7 (Cldn7) from Mus musculus (Mouse).